We begin with the raw amino-acid sequence, 813 residues long: MRVKDPSKDLPEKGKRNKRPLLPHDEDSSDDIAVGLTCQHVSYAVSVNHVKKAVAESLWSVCSECLKERRFCDGQPVLPADVWLCLKCGLQGCGKNSESQHSLRHFKSSGTESHCVVISLSTWVIWCYECNEKLSTHCNKKVLAQIVDFLQKHAFKTQTGAFSRIIKLCEEKREAGEIKKGKKGCTVPSVKGITNLGNTCFFNAVIQNLAQTYILFELMNEIKEDGTKFKISLSSAPQLEPLVVELSSPGPLTSALFLFLHSMKEAEKGPLSPKVLFNQLCQKAPRFKGFQQQDSQELLHHLLDAVRTEETKRIQASILKAFNNPTTKTADDETRKKVKAYGKEGVKMNFIDRIFIGELTSTVMCEECANISTMKDPFIDISLPIIEERVSKPVLLGKMSKCRSLQETDQDHNKGTVTVGNAHQPRASRKHSSPNDKNQLSHDRKHLRKWPSEEEKTVVTHPKNDNLEASPPASTLSTEASLNESLTDGSERDASLESSVDADSEASEPEIASKQPVLLRSRGDSCGHAEQHPHLPLASELPQAKETHGGEEEMAEAIAELHLSGTVTGNRDFHREKQPLNVPNNLCFSEGKHTRLHSAQNAFQTLSQSYVTTSKECSVQSCLYQFTSMELLMGNNKLLCEDCTEKRRKCHKETSSAEKKAGGVYTNARKQLLISAVPAILILHLKRFHQAGLSLRKVNRHVDFPLTLDLAPFCAATCKNISVGEKVLYGLYGIVEHSGSMRGGHYTAYVKVRVPSRKLSECITGRKTAAGLKEPDGELGGHWVHVSDTYVQVVPESRALSAQAYLLFYERIL.

Basic and acidic residues predominate over residues 1-14; sequence MRVKDPSKDLPEKG. A disordered region spans residues 1–27; it reads MRVKDPSKDLPEKGKRNKRPLLPHDED. An interaction with ERCC1 region spans residues 1-62; the sequence is MRVKDPSKDL…AVAESLWSVC (62 aa). A phosphoserine mark is found at serine 28 and serine 29. A UBP-type zinc finger spans residues 36-153; that stretch reads LTCQHVSYAV…AQIVDFLQKH (118 aa). The Zn(2+) site is built by cysteine 38, histidine 40, cysteine 62, cysteine 65, cysteine 85, cysteine 88, cysteine 93, histidine 101, histidine 105, histidine 114, cysteine 127, and cysteine 130. Residues 191–812 form the USP domain; that stretch reads KGITNLGNTC…QAYLLFYERI (622 aa). Cysteine 200 serves as the catalytic Nucleophile. 2 stretches are compositionally biased toward basic and acidic residues: residues 405-414 and 450-466; these read LQETDQDHNK and WPSEEEKTVVTHPKNDN. Residues 405–552 form a disordered region; that stretch reads LQETDQDHNK…QAKETHGGEE (148 aa). The span at 472–488 shows a compositional bias: polar residues; sequence PASTLSTEASLNESLTD. 2 positions are modified to phosphoserine: serine 507 and serine 525. Positions 521-533 are enriched in basic and acidic residues; it reads SRGDSCGHAEQHP. The Proton acceptor role is filled by histidine 745.

This sequence belongs to the peptidase C19 family. In terms of assembly, interacts with ERCC1. The catalytically active form interacts with SPDL1. In terms of tissue distribution, retina.

Its subcellular location is the photoreceptor inner segment. It localises to the cytoplasm. The protein resides in the nucleus. It carries out the reaction Thiol-dependent hydrolysis of ester, thioester, amide, peptide and isopeptide bonds formed by the C-terminal Gly of ubiquitin (a 76-residue protein attached to proteins as an intracellular targeting signal).. Its function is as follows. Catalyzes the deubiquitination of SPDL1. Plays a role in the repair of UV-induced DNA damage via deubiquitination of ERCC1, promoting its recruitment to DNA damage sites. May be involved in the maintenance of photoreceptor function. May play a role in normal retinal development. Plays a role in cell migration. The sequence is that of Ubiquitin carboxyl-terminal hydrolase 45 (Usp45) from Mus musculus (Mouse).